The following is a 139-amino-acid chain: MKKGVLLNADISAVISRLGHTDQIVIGDAGLPIPATTTRIDLALTRGVPGFLQVVDVVTQEMQVENAYLAEEIVKNNPQLHEALLVLLTQLEQRQENQIALRYISHEAFKEQTKQSRAVIRSGECSPFANIILGSGVTF.

H20 acts as the Proton donor in catalysis. Residues D28, H106, and 128–130 each bind substrate; that span reads FAN.

It belongs to the RbsD / FucU family. RbsD subfamily. In terms of assembly, homodecamer.

The protein resides in the cytoplasm. It carries out the reaction beta-D-ribopyranose = beta-D-ribofuranose. Its pathway is carbohydrate metabolism; D-ribose degradation; D-ribose 5-phosphate from beta-D-ribopyranose: step 1/2. In terms of biological role, catalyzes the interconversion of beta-pyran and beta-furan forms of D-ribose. The protein is D-ribose pyranase of Yersinia pseudotuberculosis serotype O:1b (strain IP 31758).